Here is a 689-residue protein sequence, read N- to C-terminus: Collagen alpha-2(IX) chain (689 aa).

An N-terminal signal peptide occupies residues 1–23 (MAAATASPRSLLVLLQVVVLALA). The segment at 26–518 (RGPPGERGPP…QPGRQGVEGR (493 aa)) is disordered. A triple-helical region 4 (COL4) region spans residues 27 to 163 (GPPGERGPPG…PGKPGRPGTI (137 aa)). Positions 31 to 43 (ERGPPGPPGPPGV) are enriched in pro residues. The segment covering 44-56 (PGSDGIDGDNGPP) has biased composition (low complexity). Pro residues-rich tracts occupy residues 106–127 (LPGP…PGPV) and 144–157 (PDGP…PGKP). P160 is modified (4-hydroxyproline). Positions 164–180 (QGLEGSADFLCPTNCPP) are nonhelical region 4 (NC4). S169 is a glycosylation site (O-linked (Xyl...) (glycosaminoglycan) serine). The segment at 181 to 519 (GMKGPPGLQG…PGRQGVEGRD (339 aa)) is triple-helical region 3 (COL3). 5-hydroxylysine is present on K183. K183 carries an O-linked (Gal...) hydroxylysine glycan. The span at 343 to 352 (GTKGGPGDQG) shows a compositional bias: gly residues. Low complexity-rich tracts occupy residues 353 to 366 (EPGP…SGPP) and 393 to 413 (RGPV…EQGP). Positions 520–549 (ATDQHIVDVALKMLQEQLAEVAVSAKREAL) are nonhelical region 3 (NC3). The tract at residues 550–632 (GAVGMMGPPG…PGLPGRPGQA (83 aa)) is triple-helical region 2 (COL2). The interval 554 to 663 (MMGPPGPPGP…LPGPVGLPGF (110 aa)) is disordered. Over residues 557–566 (PPGPPGPPGY) the composition is skewed to pro residues. The segment covering 599-611 (KRGEKGDPGEVGR) has biased composition (basic and acidic residues). A nonhelical region 2 (NC2) region spans residues 633–634 (IN). The tract at residues 635–664 (GKDGDRGSPGAPGEAGRPGLPGPVGLPGFC) is triple-helical region 1 (COL1). The tract at residues 665-689 (EPAACLGASAYASARLTEPGSIKGP) is nonhelical region 1 (NC1).

The protein belongs to the fibril-associated collagens with interrupted helices (FACIT) family. As to quaternary structure, heterotrimer of an alpha 1(IX), an alpha 2(IX) and an alpha 3(IX) chain. The chains are linked to each other by interchain disulfide bonds. Trimers are also cross-linked via hydroxylysines. In terms of processing, covalently linked to the telopeptides of type II collagen by lysine-derived cross-links. Prolines at the third position of the tripeptide repeating unit (G-X-Y) are hydroxylated in some or all of the chains.

The protein localises to the secreted. It localises to the extracellular space. Its subcellular location is the extracellular matrix. Structural component of hyaline cartilage and vitreous of the eye. The polypeptide is Collagen alpha-2(IX) chain (Homo sapiens (Human)).